Here is a 387-residue protein sequence, read N- to C-terminus: Natterin-4 (387 aa).

A signal peptide spans 1-18 (MKLLVLLVTLLVLSWTSA). Residues 19-46 (EDVGDQEILQQHNEDNNHKSELGEAAPQ) constitute a propeptide that is removed on maturation. Basic and acidic residues predominate over residues 31–40 (NEDNNHKSEL). The disordered stretch occupies residues 31-57 (NEDNNHKSELGEAAPQRTDNETSQLGQ).

It belongs to the natterin family. Post-translationally, contains 4 disulfide bonds. In terms of tissue distribution, expressed by the venom gland.

It is found in the secreted. Inhibited by tissue-kallikrein inhibitor TKI and trasylol. Plasma kallikrein inhibitor PKSI527 and classical inhibitors of serine-, metallo-, thiol- or aspartate-peptidases evokes a minor inhibition of the peptide digestion. Shows nociceptive, edema-inducing and kininogenase activity with release of kallidin from low molecular weight kininogen. The cleavage occurs at Met-Lys bonds. This Thalassophryne nattereri (Copper Joe toadfish) protein is Natterin-4.